Here is a 553-residue protein sequence, read N- to C-terminus: MFCIQCEQTIQTPTTKGCSFAQGMCGKTAEVSDLQDILVYALQGVSFWAEQGRKVNVIFDEIDQWAPKAFFATLTNVNFDPERVIEFALQAQAYKQQLEETVRAAATVTNTELDELSPAAKFELPTEAEQIIALAPQAAVNRGHETQHEDIIGLRLLCLYGLKGAAAYMEHARVLGQTDKDVFAEYHQIMAWLGTDPTDLGELLDCSMKIGLMNYRIMEMLDTGETDTFGHPEPSQVNVKTIEGKCILVSGHDLHDLEKILQQTEGKGINVYTNGEMLPAHSYPELKKYPHLVGNYGSAWQNQQKEFANFPGAIVMTSNCLLNPNVGQYADRLFTRSIVGWPGVAHIEGDDFTTVIDCALAQEGFKHNEIEQMITVGFGRNALMAAAPAVVEQVKEGNISHFFLVGGCDGDKSERSYYTDFTAQAPEDSVILTLACGKYRFNKNQFGDINGIPRLLDVGQCNDAYSAIQLALALAKEFDCDINELPLTLVLSWFEQKAIVILLTLFALGVKGIYTGPTAPAFLTDNLLAIIQEKFDMRSIGNVEDDLKAILAA.

C3, C6, C18, and C25 together coordinate [2Fe-2S] cluster. Hybrid [4Fe-2O-2S] cluster contacts are provided by H252, E276, C320, C408, C436, C461, E495, and K497. C408 is subject to Cysteine persulfide.

Belongs to the HCP family. The cofactor is [2Fe-2S] cluster. Hybrid [4Fe-2O-2S] cluster serves as cofactor.

The protein resides in the cytoplasm. It carries out the reaction A + NH4(+) + H2O = hydroxylamine + AH2 + H(+). Functionally, catalyzes the reduction of hydroxylamine to form NH(3) and H(2)O. The sequence is that of Hydroxylamine reductase from Aliivibrio fischeri (strain MJ11) (Vibrio fischeri).